The following is a 167-amino-acid chain: Adenylylsulfate reductase subunit beta (167 aa).

4Fe-4S ferredoxin-type domains are found at residues 1 to 35 (MPTFVDPSKCDGCKGGEKTACMYICPNDLMILDPE) and 38 to 67 (KAFNQEPEACWECYSCIKICPQGAITARPY). Positions 10, 13, 21, 25, 47, 50, 53, and 57 each coordinate [4Fe-4S] cluster.

In terms of assembly, heterodimer composed of AprA and AprB. The heterodimers can dimerize to form heterotetramers. [4Fe-4S] cluster is required as a cofactor.

It localises to the cytoplasm. In terms of biological role, iron-sulfur cluster subunit of the adenylylsulfate reductase which catalyzes reversibly the reduction of adenosine 5'-phosphosulfate (APS) to sulfite and AMP during dissimilatory sulfate reduction. The iron-sulfur cluster 2 is thought to accept electrons from a still unknown electron donor and transfer electrons to the iron-sulfur cluster 1 of this protein and then onto the FAD of AprA. This Megalodesulfovibrio gigas (strain ATCC 19364 / DSM 1382 / NCIMB 9332 / VKM B-1759) (Desulfovibrio gigas) protein is Adenylylsulfate reductase subunit beta.